Reading from the N-terminus, the 189-residue chain is Small ribosomal subunit protein uS4 (189 aa).

An S4 RNA-binding domain is found at 107–178 (RRLQTQVFKL…AGRVKRKNQG (72 aa)). The segment at 160–189 (HNSPYGGGRAGRVKRKNQGKGGEEGAEEEE) is disordered.

The protein belongs to the universal ribosomal protein uS4 family. In terms of assembly, component of the small ribosomal subunit. Mature ribosomes consist of a small (40S) and a large (60S) subunit. The 40S subunit contains about 32 different proteins and 1 molecule of RNA (18S). The 60S subunit contains 45 different proteins and 3 molecules of RNA (25S, 5.8S and 5S).

The protein localises to the cytoplasm. In terms of biological role, component of the ribosome, a large ribonucleoprotein complex responsible for the synthesis of proteins in the cell. The small ribosomal subunit (SSU) binds messenger RNAs (mRNAs) and translates the encoded message by selecting cognate aminoacyl-transfer RNA (tRNA) molecules. The large subunit (LSU) contains the ribosomal catalytic site termed the peptidyl transferase center (PTC), which catalyzes the formation of peptide bonds, thereby polymerizing the amino acids delivered by tRNAs into a polypeptide chain. The nascent polypeptides leave the ribosome through a tunnel in the LSU and interact with protein factors that function in enzymatic processing, targeting, and the membrane insertion of nascent chains at the exit of the ribosomal tunnel. RPS9B is involved in nucleolar processing of pre-18S ribosomal RNA and ribosome assembly. This is Small ribosomal subunit protein uS4 (RPS9B) from Candida albicans (strain SC5314 / ATCC MYA-2876) (Yeast).